A 506-amino-acid chain; its full sequence is Cytochrome P450 monooxygenase atr2 (506 aa).

Residues 18-38 (VFAGLVLASLLTTTYCIWNIF) traverse the membrane as a helical segment. Cys451 contributes to the heme binding site.

This sequence belongs to the cytochrome P450 family. The cofactor is heme.

The protein resides in the membrane. It catalyses the reaction 4-O-demethylbarbatate + reduced [NADPH--hemoprotein reductase] + O2 = proatranorin II + oxidized [NADPH--hemoprotein reductase] + H2O + H(+). The enzyme catalyses proatranorin II + reduced [NADPH--hemoprotein reductase] + O2 = proatranorin III + oxidized [NADPH--hemoprotein reductase] + 2 H2O + H(+). It carries out the reaction proatranorin I + reduced [NADPH--hemoprotein reductase] + O2 = proatranorin IV + oxidized [NADPH--hemoprotein reductase] + H2O + H(+). The catalysed reaction is proatranorin IV + reduced [NADPH--hemoprotein reductase] + O2 = atranorin + oxidized [NADPH--hemoprotein reductase] + 2 H2O + H(+). The protein operates within secondary metabolite biosynthesis; terpenoid biosynthesis. Cytochrome P450 monooxygenase; part of the gene cluster that mediates the biosynthesis of atranorin, a depside of polyketide origin that accumulates in the cortical or medullary layers of lichen thalli. Atr2 performs the oxidation at the C-9 position of 4-O-demethylbarbatic acid to yield proatranorin III via proatranorin II. Atr2 is also able to oxidize the atr3 product proatranorin I to produce the final compound atranorin. The first step in the pathway is performed by the non-reducing polyketide synthase atr1 that produces 4-O-demethylbarbatic acid composed of two 3-methylorsellinic acid (3MOA) moieties. The pathway continues with the actions of the cytochrome P450 monooygenase atr2 that catalizes the oxidation of c-9 and the O-methyltransferase atr3 that performs the methylation of the carboxyl group to yield atranorin, via the proatranorin II and III intermediates if atr2 acts first, or the proatranorin I intermediate if atr3 acts first. In Stereocaulon alpinum (Alpine snow lichen), this protein is Cytochrome P450 monooxygenase atr2.